A 124-amino-acid chain; its full sequence is MPTIQQLVRKGREDKVVKTKTPALKGSPQRRGVCTRVYTTTPKKPNSALRKVARVKLTSGIEVTAYIPGVGHNLQEHSMVLVRGGRVKDLPGVRYKIVRGSLDTQGVKNRKQARSRYGAKKEKS.

The interval 1–32 (MPTIQQLVRKGREDKVVKTKTPALKGSPQRRG) is disordered. Asp-89 bears the 3-methylthioaspartic acid mark. The tract at residues 105–124 (QGVKNRKQARSRYGAKKEKS) is disordered. Residues 108–118 (KNRKQARSRYG) are compositionally biased toward basic residues.

Belongs to the universal ribosomal protein uS12 family. As to quaternary structure, part of the 30S ribosomal subunit. Contacts proteins S8 and S17. May interact with IF1 in the 30S initiation complex.

Its function is as follows. With S4 and S5 plays an important role in translational accuracy. In terms of biological role, interacts with and stabilizes bases of the 16S rRNA that are involved in tRNA selection in the A site and with the mRNA backbone. Located at the interface of the 30S and 50S subunits, it traverses the body of the 30S subunit contacting proteins on the other side and probably holding the rRNA structure together. The combined cluster of proteins S8, S12 and S17 appears to hold together the shoulder and platform of the 30S subunit. The protein is Small ribosomal subunit protein uS12 of Kineococcus radiotolerans (strain ATCC BAA-149 / DSM 14245 / SRS30216).